Consider the following 74-residue polypeptide: ATP synthase subunit 9, mitochondrial (74 aa).

Helical transmembrane passes span 16-36 (GLIG…IGVS) and 50-70 (ILGF…AFLL).

It belongs to the ATPase C chain family. F-type ATPases have 2 components, CF(1) - the catalytic core - and CF(0) - the membrane proton channel. CF(1) has five subunits: alpha(3), beta(3), gamma(1), delta(1), epsilon(1). CF(0) has three main subunits: a, b and c.

It is found in the mitochondrion inner membrane. Its function is as follows. Mitochondrial membrane ATP synthase (F(1)F(0) ATP synthase or Complex V) produces ATP from ADP in the presence of a proton gradient across the membrane which is generated by electron transport complexes of the respiratory chain. F-type ATPases consist of two structural domains, F(1) - containing the extramembraneous catalytic core and F(0) - containing the membrane proton channel, linked together by a central stalk and a peripheral stalk. During catalysis, ATP synthesis in the catalytic domain of F(1) is coupled via a rotary mechanism of the central stalk subunits to proton translocation. Part of the complex F(0) domain. A homomeric c-ring of probably 10 subunits is part of the complex rotary element. The polypeptide is ATP synthase subunit 9, mitochondrial (atp-9) (Neurospora crassa (strain ATCC 24698 / 74-OR23-1A / CBS 708.71 / DSM 1257 / FGSC 987)).